The following is a 162-amino-acid chain: Small ribosomal subunit protein uS12m (162 aa).

The transit peptide at 1-37 (MIRFAQYARYPVISRLMKPTVISPFQAQAFSSSSVML) directs the protein to the mitochondrion.

Belongs to the universal ribosomal protein uS12 family. Component of the mitochondrial small ribosomal subunit (mt-SSU). Mature yeast 74S mitochondrial ribosomes consist of a small (37S) and a large (54S) subunit. The 37S small subunit contains a 15S ribosomal RNA (15S mt-rRNA) and at least 32 different proteins. The 54S large subunit contains a 21S rRNA (21S mt-rRNA) and at least 45 different proteins. uS12m forms part of the decoding center of the mt-SSU.

It is found in the mitochondrion. Component of the mitochondrial ribosome (mitoribosome), a dedicated translation machinery responsible for the synthesis of mitochondrial genome-encoded proteins, including at least some of the essential transmembrane subunits of the mitochondrial respiratory chain. The mitoribosomes are attached to the mitochondrial inner membrane and translation products are cotranslationally integrated into the membrane. uS12m is required for respiratory growth. The polypeptide is Small ribosomal subunit protein uS12m (Schizosaccharomyces pombe (strain 972 / ATCC 24843) (Fission yeast)).